The chain runs to 140 residues: Endoribonuclease YbeY (140 aa).

The Zn(2+) site is built by His-101, His-105, and His-111.

The protein belongs to the endoribonuclease YbeY family. Requires Zn(2+) as cofactor.

Its subcellular location is the cytoplasm. In terms of biological role, single strand-specific metallo-endoribonuclease involved in late-stage 70S ribosome quality control and in maturation of the 3' terminus of the 16S rRNA. The sequence is that of Endoribonuclease YbeY from Aliarcobacter butzleri (strain RM4018) (Arcobacter butzleri).